The primary structure comprises 457 residues: Chromogranin-A (457 aa).

An N-terminal signal peptide occupies residues 1-18 (MRSAAVLALLLCAGQVTA). The cysteines at positions 35 and 56 are disulfide-linked. Residues 41 to 59 (SDTLSKPSPMPVSQECFET) are O-glycosylated at one site only in cerebrospinal fluid. The interval 88–440 (KERAHQQKKH…DQELESLSAI (353 aa)) is disordered. Positions 116–144 (ELKEAVEEPSSKDVMEKREDSKEAEKSGE) are enriched in basic and acidic residues. Serine 142 is modified (phosphoserine). A compositionally biased stretch (acidic residues) spans 171 to 180 (GEEEEEEEEA). Residues threonine 181 and threonine 183 are each glycosylated (O-linked (GalNAc...) threonine). The segment at 181-191 (TNTHPPASLPS) is O-glycosylated at one site only in cerebrospinal fluid. Positions 182–191 (NTHPPASLPS) are enriched in polar residues. Tyrosine 194 is modified (phosphotyrosine). Serine 203 and serine 218 each carry phosphoserine. Acidic residues predominate over residues 229–249 (EEEEEEEEAEAGEEAVPEEEG). Residue threonine 251 is glycosylated (O-linked (GalNAc...) threonine). Basic and acidic residues-rich tracts occupy residues 263-272 (KEIRKGESRS) and 291-303 (PEGK…SQQK). A phosphoserine mark is found at serine 270 and serine 300. At glycine 319 the chain carries Glycine amide. 3 positions are modified to phosphoserine: serine 322, serine 333, and serine 371. Residues 330 to 360 (ERLSKEWEDSKRWSKMDQLAKELTAEKRLEG) show a composition bias toward basic and acidic residues. Methionine 372 is subject to Methionine sulfoxide. Serine 398, serine 402, serine 424, and serine 438 each carry phosphoserine. A compositionally biased stretch (basic and acidic residues) spans 414-431 (YPEEKKEEEGSANRRPED). Serine 424 carries O-linked (Xyl...) (chondroitin sulfate) serine glycosylation. An Arginine amide modification is found at arginine 456.

It belongs to the chromogranin/secretogranin protein family. Self-interacts; self-assembly is promoted in vitro by chondroitin sulfate attachment which occurs at mildly acidic pH conditions. Interacts with SCG3. Interacts with ITPR1 in the secretory granules. Sulfated on tyrosine residues and/or contains sulfated glycans. Post-translationally, O-glycosylated with core 1 or possibly core 8 glycans. Contains chondroitin sulfate (CS); CS attachment is pH-dependent, being observed at mildly acidic conditions of pH 5 but not at neutral pH, and promotes self-assembly in vitro. In terms of processing, proteolytic processing gives rise to an additional longer form of catestatin (residues 358-390) which displays a less potent catecholamine release-inhibitory activity. Plasmin-mediated proteolytic processing can give rise to additional shorter and longer forms of catestatin peptides. In terms of tissue distribution, detected in cerebrospinal fluid (at protein level). Detected in urine (at protein level). Found in the brain.

The protein resides in the secreted. It localises to the cytoplasmic vesicle. The protein localises to the secretory vesicle. Its subcellular location is the neuronal dense core vesicle. Its function is as follows. Strongly inhibits glucose induced insulin release from the pancreas. Inhibits catecholamine release from chromaffin cells and noradrenergic neurons by acting as a non-competitive nicotinic cholinergic antagonist. Displays antibacterial activity against Gram-positive bacteria S.aureus and M.luteus, and Gram-negative bacteria E.coli and P.aeruginosa. Can induce mast cell migration, degranulation and production of cytokines and chemokines. Acts as a potent scavenger of free radicals in vitro. May play a role in the regulation of cardiac function and blood pressure. In terms of biological role, regulates granule biogenesis in endocrine cells by up-regulating the transcription of protease nexin 1 (SERPINE2) via a cAMP-PKA-SP1 pathway. This leads to inhibition of granule protein degradation in the Golgi complex which in turn promotes granule formation. The sequence is that of Chromogranin-A (CHGA) from Homo sapiens (Human).